The sequence spans 212 residues: Thymidylate kinase (212 aa).

11–18 provides a ligand contact to ATP; the sequence is GPEGAGKT.

It belongs to the thymidylate kinase family.

It carries out the reaction dTMP + ATP = dTDP + ADP. Phosphorylation of dTMP to form dTDP in both de novo and salvage pathways of dTTP synthesis. This is Thymidylate kinase from Streptococcus pneumoniae (strain Taiwan19F-14).